The primary structure comprises 193 residues: Dual-action ribosomal maturation protein DarP (193 aa).

It belongs to the DarP family.

It is found in the cytoplasm. In terms of biological role, member of a network of 50S ribosomal subunit biogenesis factors which assembles along the 30S-50S interface, preventing incorrect 23S rRNA structures from forming. Promotes peptidyl transferase center (PTC) maturation. In Vibrio cholerae serotype O1 (strain ATCC 39315 / El Tor Inaba N16961), this protein is Dual-action ribosomal maturation protein DarP.